The chain runs to 383 residues: MKEADLITLRRQLHQIPELALQEKETHALLLKTIQGLPQTYLTIRTLPDLPTALLVKVQGRDPQRTIGYRTDIDALPVTEKTGLPFASKHSGIAHACGHDIHMTVALGILSYFAEHQPKDNLIFFFQPAEESKNGGKLAYDMGAFTGDWHIDEFYGLHDRPDLPAGTISTRLGTLFAGTTEINVDLIGKSGHAALPQNANDMIVAAASFISQIQTVVARNVGPTDSAVITFGLMRAGTIRNVIAGRAHLEGTLRGFTQQQIDFLQQRIRDIGQGIAASFNCQVKVALNQGGYYPVENNDKLTKDFIQVMKDDPDVTFVDTKPVMTGEDFGYLLNKIPGTMFWLGVNDPDSQLHAADFSPDEAALVPGVTAVVHFLEHRMLEKV.

D72 is an active-site residue. Residue E131 is the Proton acceptor of the active site.

This sequence belongs to the peptidase M20A family. N-acetyldiaminopimelate deacetylase subfamily.

It carries out the reaction N-acetyl-(2S,6S)-2,6-diaminopimelate + H2O = (2S,6S)-2,6-diaminopimelate + acetate. Its pathway is amino-acid biosynthesis; L-lysine biosynthesis via DAP pathway; LL-2,6-diaminopimelate from (S)-tetrahydrodipicolinate (acetylase route): step 3/3. In terms of biological role, catalyzes the conversion of N-acetyl-diaminopimelate to diaminopimelate and acetate. The protein is N-acetyldiaminopimelate deacetylase of Lacticaseibacillus casei (strain BL23) (Lactobacillus casei).